Here is a 337-residue protein sequence, read N- to C-terminus: Endochitinase 37 (337 aa).

The N-terminal stretch at 1 to 25 (MTRLLDASFLLLPVIASTLFGTASA) is a signal peptide. The GH18 domain occupies 38–337 (KVLQGYWENW…GSKNWTFGDN (300 aa)). Glutamate 160 functions as the Proton donor in the catalytic mechanism. The N-linked (GlcNAc...) asparagine glycan is linked to asparagine 331.

It belongs to the glycosyl hydrolase 18 family. Chitinase class V subfamily. Monomer.

Its subcellular location is the secreted. It carries out the reaction Random endo-hydrolysis of N-acetyl-beta-D-glucosaminide (1-&gt;4)-beta-linkages in chitin and chitodextrins.. In terms of biological role, secreted chitinase involved in the degradation of chitin, a component of the cell walls of fungi and exoskeletal elements of some animals (including worms and arthropods). Plays a morphogenetic role during apical growth, cell division and differentiation (cell wall morphogenesis). May be involved in the degradation and further assimilation of phytopathogenic fungi, namely mycoparasitism, the major mechanism accounting for the antagonistic activity against phytopathogenic fungi displayed by Trichoderma. In Trichoderma harzianum (Hypocrea lixii), this protein is Endochitinase 37 (chit37).